A 424-amino-acid chain; its full sequence is MSAEIICVGTELLLGDILNGNAQYLAQQLAQLGIPHYHQTVVGDNPDRIKQVIKIAISRANILIFTGGLGPTPDDLTCETIADFFGSPLVESPAIIEDITQKFAQRGRVMTPSNRKQALIPQGADILPNPTGTAPGIIWEPRPNMTIFTFPGVPSEMHRMWEETAVPFLKSQGWGQEIIYSRSLKFWGIGESALAEKVTAYLNLPNPTVAPYAGKGEVRLRVSAKAPSEAAAEALIAPVEKQIKDIAGLDFYGVNNDSLASVVGELLRSSGETLSVAESCTGGLLGQMLTEISGSSDYFWGGVISYDNSVKAGLLGVNSEDLEKLGAVSDTVAEQMAMGVKTRLSTTWGLSITGIAGPDGGTETKPVGLVYIGLAGPGDEVSSFKYNFGTMRVGLRPTVGDRSFIRHLSACTALDLLRRRLLTR.

It belongs to the CinA family.

In Nostoc sp. (strain PCC 7120 / SAG 25.82 / UTEX 2576), this protein is CinA-like protein.